Reading from the N-terminus, the 199-residue chain is Pyridoxal 5'-phosphate synthase subunit PdxT (199 aa).

51 to 53 is a binding site for L-glutamine; it reads GES. Residue Cys83 is the Nucleophile of the active site. L-glutamine contacts are provided by residues Arg110 and 137-138; that span reads IR. Catalysis depends on charge relay system residues His172 and Glu174.

This sequence belongs to the glutaminase PdxT/SNO family. In the presence of PdxS, forms a dodecamer of heterodimers. Only shows activity in the heterodimer.

The catalysed reaction is aldehydo-D-ribose 5-phosphate + D-glyceraldehyde 3-phosphate + L-glutamine = pyridoxal 5'-phosphate + L-glutamate + phosphate + 3 H2O + H(+). It catalyses the reaction L-glutamine + H2O = L-glutamate + NH4(+). The protein operates within cofactor biosynthesis; pyridoxal 5'-phosphate biosynthesis. Catalyzes the hydrolysis of glutamine to glutamate and ammonia as part of the biosynthesis of pyridoxal 5'-phosphate. The resulting ammonia molecule is channeled to the active site of PdxS. The protein is Pyridoxal 5'-phosphate synthase subunit PdxT of Thermoplasma volcanium (strain ATCC 51530 / DSM 4299 / JCM 9571 / NBRC 15438 / GSS1).